We begin with the raw amino-acid sequence, 114 residues long: DNA-directed RNA polymerases II, IV and V subunit 9A (114 aa).

Zn(2+) is bound by residues C7, C10, C29, C32, C76, C79, C103, and C108. The TFIIS-type zinc finger occupies 72 to 113 (KAVRCSKCQHREAVFFQATARGEEGMTLFFVCCNPNCGHRWR).

It belongs to the archaeal RpoM/eukaryotic RPA12/RPB9/RPC11 RNA polymerase family. In terms of assembly, component of the RNA polymerase II, IV and V complexes. Interacts with NRPD1.

The protein localises to the nucleus. It is found in the nucleolus. DNA-dependent RNA polymerase catalyzes the transcription of DNA into RNA using the four ribonucleoside triphosphates as substrates. Component of RNA polymerase II which synthesizes mRNA precursors and many functional non-coding RNAs. Pol II is the central component of the basal RNA polymerase II transcription machinery. It is composed of mobile elements that move relative to each other. Component of RNA polymerases IV and V which mediate short-interfering RNAs (siRNA) accumulation and subsequent RNA-directed DNA methylation-dependent (RdDM) transcriptional gene silencing (TGS) of endogenous repeated sequences, including transposable elements. Required for RNA silencing. In Arabidopsis thaliana (Mouse-ear cress), this protein is DNA-directed RNA polymerases II, IV and V subunit 9A (NRPB9A).